The chain runs to 368 residues: MPKPGELTFVAPRGVKKPPRHLADLTPAERKEAVAAIGEKPFRAKQLSQHYFARYAHAPEQWTDIPAGSREGLREALLPELMTVVRHLSTDQGTTRKTLWKLFDGTLVESVLMRYPDRVTMCISSQAGCGMNCPFCATGQAGLDRNLSTAEIVHQIVDGMRALRDGEVPGGPARLSNIVFMGMGEPLANYNRVVGAIRRLTDPEPDGLGLSQRGITVSTVGLVPAIHRFTGEGFKCRLAISLHAPDDELRDTLVPVNTRWKVREVLDAGFEYAAKSGRRLSIEYALIRDINDQAWRGDRLGRLLRGRPVHVNLIPLNPTPGSKWTASRPEDEKAFVEAIAAHGVPVTIRDTRGQEIDGACGQLAASER.

E109 acts as the Proton acceptor in catalysis. Positions 115 to 355 constitute a Radical SAM core domain; sequence YPDRVTMCIS…VTIRDTRGQE (241 aa). Residues C122 and C360 are joined by a disulfide bond. [4Fe-4S] cluster contacts are provided by C129, C133, and C136. S-adenosyl-L-methionine-binding positions include 184–185, S218, 241–243, and N317; these read GE and SLH. Catalysis depends on C360, which acts as the S-methylcysteine intermediate.

It belongs to the radical SAM superfamily. RlmN family. [4Fe-4S] cluster serves as cofactor.

The protein localises to the cytoplasm. The catalysed reaction is adenosine(2503) in 23S rRNA + 2 reduced [2Fe-2S]-[ferredoxin] + 2 S-adenosyl-L-methionine = 2-methyladenosine(2503) in 23S rRNA + 5'-deoxyadenosine + L-methionine + 2 oxidized [2Fe-2S]-[ferredoxin] + S-adenosyl-L-homocysteine. The enzyme catalyses adenosine(37) in tRNA + 2 reduced [2Fe-2S]-[ferredoxin] + 2 S-adenosyl-L-methionine = 2-methyladenosine(37) in tRNA + 5'-deoxyadenosine + L-methionine + 2 oxidized [2Fe-2S]-[ferredoxin] + S-adenosyl-L-homocysteine. Its function is as follows. Specifically methylates position 2 of adenine 2503 in 23S rRNA and position 2 of adenine 37 in tRNAs. In Streptomyces coelicolor (strain ATCC BAA-471 / A3(2) / M145), this protein is Probable dual-specificity RNA methyltransferase RlmN.